We begin with the raw amino-acid sequence, 290 residues long: Zinc finger matrin-type protein 3 (290 aa).

Matrin-type zinc fingers lie at residues 70 to 100 and 148 to 178; these read LFCK…KLRN and DYCK…RLRL. 2 disordered regions span residues 182-203 and 266-290; these read QSHS…EGSE and ESKQ…GYVQ. The Matrin-type 3 zinc-finger motif lies at 246–276; that stretch reads FYCSMCNVGAGEEVEFRQHLESKQHKSKVSE. The span at 266 to 283 shows a compositional bias: basic and acidic residues; it reads ESKQHKSKVSEQRYRSEM.

As to quaternary structure, interacts with dsRNA. As to expression, constitutively expressed in brain and testis. Also expressed in lung, kidney and spleen after whole body gamma irradiation.

It is found in the nucleus. Its subcellular location is the nucleolus. Acts as a bona fide target gene of p53/TP53. May play a role in the TP53-dependent growth regulatory pathway. May contribute to TP53-mediated apoptosis by regulation of TP53 expression and translocation to the nucleus and nucleolus. This chain is Zinc finger matrin-type protein 3, found in Mus musculus (Mouse).